We begin with the raw amino-acid sequence, 261 residues long: Cytochrome c oxidase subunit 3 (261 aa).

Residues 1–15 lie on the Mitochondrial matrix side of the membrane; it reads MTHQTHAYHMVNPSP. Residues 16-34 form a helical membrane-spanning segment; that stretch reads WPLTGALSALLMTSGLAMW. The Mitochondrial intermembrane portion of the chain corresponds to 35–40; sequence FHFNST. The helical transmembrane segment at 41 to 66 threads the bilayer; that stretch reads LLLALGLLTNILTMYQWWRDIIREST. Residues 67–72 are Mitochondrial matrix-facing; it reads FQGHHT. A helical transmembrane segment spans residues 73-105; it reads SIVQKGLRYGMILFIISEVFFFSGFFWAFYHSS. At 106–128 the chain is on the mitochondrial intermembrane side; it reads LAPTPELGGCWPPTGIHPLNPLE. A helical membrane pass occupies residues 129 to 152; it reads VPLLNTSVLLASGVSITWAHHSLM. Topologically, residues 153–155 are mitochondrial matrix; that stretch reads EGN. Residues 156–183 form a helical membrane-spanning segment; that stretch reads RKNMLQGLFITISLGVYFTLLQASEYYE. Residues 184-190 are Mitochondrial intermembrane-facing; it reads ASFTISD. The helical transmembrane segment at 191-223 threads the bilayer; that stretch reads GVYGSTFFVATGFHGLHVIIGSTFLIVCFLRQL. Over 224-232 the chain is Mitochondrial matrix; that stretch reads KFHFTSSHH. The chain crosses the membrane as a helical span at residues 233–256; that stretch reads FGFEAAAWYWHFVDVVWLFLYVSI. Over 257–261 the chain is Mitochondrial intermembrane; it reads YWWGS.

This sequence belongs to the cytochrome c oxidase subunit 3 family. As to quaternary structure, component of the cytochrome c oxidase (complex IV, CIV), a multisubunit enzyme composed of 14 subunits. The complex is composed of a catalytic core of 3 subunits MT-CO1, MT-CO2 and MT-CO3, encoded in the mitochondrial DNA, and 11 supernumerary subunits COX4I, COX5A, COX5B, COX6A, COX6B, COX6C, COX7A, COX7B, COX7C, COX8 and NDUFA4, which are encoded in the nuclear genome. The complex exists as a monomer or a dimer and forms supercomplexes (SCs) in the inner mitochondrial membrane with NADH-ubiquinone oxidoreductase (complex I, CI) and ubiquinol-cytochrome c oxidoreductase (cytochrome b-c1 complex, complex III, CIII), resulting in different assemblies (supercomplex SCI(1)III(2)IV(1) and megacomplex MCI(2)III(2)IV(2)).

The protein resides in the mitochondrion inner membrane. The catalysed reaction is 4 Fe(II)-[cytochrome c] + O2 + 8 H(+)(in) = 4 Fe(III)-[cytochrome c] + 2 H2O + 4 H(+)(out). Component of the cytochrome c oxidase, the last enzyme in the mitochondrial electron transport chain which drives oxidative phosphorylation. The respiratory chain contains 3 multisubunit complexes succinate dehydrogenase (complex II, CII), ubiquinol-cytochrome c oxidoreductase (cytochrome b-c1 complex, complex III, CIII) and cytochrome c oxidase (complex IV, CIV), that cooperate to transfer electrons derived from NADH and succinate to molecular oxygen, creating an electrochemical gradient over the inner membrane that drives transmembrane transport and the ATP synthase. Cytochrome c oxidase is the component of the respiratory chain that catalyzes the reduction of oxygen to water. Electrons originating from reduced cytochrome c in the intermembrane space (IMS) are transferred via the dinuclear copper A center (CU(A)) of subunit 2 and heme A of subunit 1 to the active site in subunit 1, a binuclear center (BNC) formed by heme A3 and copper B (CU(B)). The BNC reduces molecular oxygen to 2 water molecules using 4 electrons from cytochrome c in the IMS and 4 protons from the mitochondrial matrix. In Equus asinus (Donkey), this protein is Cytochrome c oxidase subunit 3 (MT-CO3).